A 291-amino-acid polypeptide reads, in one-letter code: Mitochondrial fission factor (291 aa).

At 1 to 271 (MAEISRIQYE…ENKERAKREM (271 aa)) the chain is on the cytoplasmic side. Thr-89 bears the Phosphothreonine mark. A disordered region spans residues 106–134 (LERPLPTPQSEESRAVGRLKRERSMSENA). 3 positions are modified to phosphoserine: Ser-129, Ser-131, and Ser-146. Thr-149 is modified (phosphothreonine). Residues Ser-151, Ser-178, Ser-182, and Ser-244 each carry the phosphoserine modification. Positions 240–271 (VDAASLRRQIIKLNRRLQLLEEENKERAKREM) form a coiled coil. The chain crosses the membrane as a helical; Anchor for type IV membrane protein span at residues 272 to 289 (VMYSITVAFWLLNSWLWF). Over 290–291 (RR) the chain is Mitochondrial intermembrane.

Belongs to the Tango11 family. Homodimer. Interacts with DNM1L. Interacts with C11orf65/MFI; the interaction inhibits MFF interaction with DNM1L.

It localises to the mitochondrion outer membrane. The protein resides in the peroxisome. Its subcellular location is the cytoplasmic vesicle. It is found in the secretory vesicle. The protein localises to the synaptic vesicle. Its function is as follows. Plays a role in mitochondrial and peroxisomal fission. Promotes the recruitment and association of the fission mediator dynamin-related protein 1 (DNM1L) to the mitochondrial surface. May be involved in regulation of synaptic vesicle membrane dynamics by recruitment of DNM1L to clathrin-containing vesicles. This chain is Mitochondrial fission factor (Mff), found in Mus musculus (Mouse).